Here is a 402-residue protein sequence, read N- to C-terminus: MGTSTTESVVACEFCGERTAVLFCRADTAKLCLPCDQHVHSANLLSRKHVRSQICDNCSKEPVSVRCFTDNLVLCQECDWDVHGSCSSSATHERSAVEGFSGCPSVLELAAVWGIDLKGKKKEDDEDELTKNFGMGLDSWGSGSNIVQELIVPYDVSCKKQSFSFGRSKQVVFEQLELLKRGFVEGEGEIMVPEGINGGGSISQPSPTTSFTSLLMSQSLCGNGMQWNATNHSTGQNTQIWDFNLGQSRNPDEPSPVETKGSTFTFNNVTHLKNDTRTTNMNAFKESYQQEDSVHSTSTKGQETSKSNNIPAAIHSHKSSNDSCGLHCTEHIAITSNRATRLVAVTNADLEQMAQNRDNAMQRYKEKKKTRRYDKTIRYETRKARAETRLRVKGRFVKATDP.

Zn(2+) is bound by residues C12, C15, C35, H40, C55, C58, C78, and H83. The segment at 12 to 54 (CEFCGERTAVLFCRADTAKLCLPCDQHVHSANLLSRKHVRSQI) adopts a B box-type 1; atypical zinc-finger fold. A B box-type 2; atypical zinc finger spans residues 55-97 (CDNCSKEPVSVRCFTDNLVLCQECDWDVHGSCSSSATHERSAV). The tract at residues 287–322 (SYQQEDSVHSTSTKGQETSKSNNIPAAIHSHKSSND) is disordered. Over residues 295–310 (HSTSTKGQETSKSNNI) the composition is skewed to polar residues. Residues 345 to 372 (VTNADLEQMAQNRDNAMQRYKEKKKTRR) are a coiled coil. One can recognise a CCT domain in the interval 357-399 (RDNAMQRYKEKKKTRRYDKTIRYETRKARAETRLRVKGRFVKA).

This sequence belongs to the CONSTANS family.

It localises to the nucleus. This chain is Zinc finger protein CONSTANS-LIKE 14 (COL14), found in Arabidopsis thaliana (Mouse-ear cress).